The following is a 117-amino-acid chain: Large ribosomal subunit protein uL18 (117 aa).

This sequence belongs to the universal ribosomal protein uL18 family. As to quaternary structure, part of the 50S ribosomal subunit; part of the 5S rRNA/L5/L18/L25 subcomplex. Contacts the 5S and 23S rRNAs.

Its function is as follows. This is one of the proteins that bind and probably mediate the attachment of the 5S RNA into the large ribosomal subunit, where it forms part of the central protuberance. The sequence is that of Large ribosomal subunit protein uL18 from Methylobacillus flagellatus (strain ATCC 51484 / DSM 6875 / VKM B-1610 / KT).